Reading from the N-terminus, the 190-residue chain is Elongation factor P (190 aa).

Belongs to the elongation factor P family.

It is found in the cytoplasm. It participates in protein biosynthesis; polypeptide chain elongation. Involved in peptide bond synthesis. Stimulates efficient translation and peptide-bond synthesis on native or reconstituted 70S ribosomes in vitro. Probably functions indirectly by altering the affinity of the ribosome for aminoacyl-tRNA, thus increasing their reactivity as acceptors for peptidyl transferase. The chain is Elongation factor P from Pseudomonas fluorescens (strain SBW25).